Consider the following 264-residue polypeptide: ATP synthase subunit a (264 aa).

6 consecutive transmembrane segments (helical) span residues 29 to 49, 90 to 110, 134 to 154, 177 to 197, 208 to 228, and 235 to 255; these read TWHI…LWIF, IAPL…MDMI, DVNI…FYSI, IPVN…SLAL, LIFI…TLGV, and LIFH…LTIV.

The protein belongs to the ATPase A chain family. As to quaternary structure, F-type ATPases have 2 components, CF(1) - the catalytic core - and CF(0) - the membrane proton channel. CF(1) has five subunits: alpha(3), beta(3), gamma(1), delta(1), epsilon(1). CF(0) has three main subunits: a(1), b(2) and c(9-12). The alpha and beta chains form an alternating ring which encloses part of the gamma chain. CF(1) is attached to CF(0) by a central stalk formed by the gamma and epsilon chains, while a peripheral stalk is formed by the delta and b chains.

It is found in the cell inner membrane. In terms of biological role, key component of the proton channel; it plays a direct role in the translocation of protons across the membrane. The protein is ATP synthase subunit a of Shewanella baltica (strain OS223).